The primary structure comprises 250 residues: Flavin-dependent thymidylate synthase (250 aa).

Residues 7–233 (LRVQLIAKTE…PQVFSDFEIV (227 aa)) form the ThyX domain. FAD contacts are provided by residues Ser-71, 95–97 (RHR), and Gln-103. DUMP is bound by residues 92-95 (ELIR), 103-107 (QLSQR), and Arg-172. The ThyX motif signature appears at 95–105 (RHRHFSYSQLS). Residues 188 to 190 (NYR) and His-194 contribute to the FAD site. Arg-199 contacts dUMP. The active-site Involved in ionization of N3 of dUMP, leading to its activation is Arg-199.

This sequence belongs to the thymidylate synthase ThyX family. As to quaternary structure, homotetramer. FAD is required as a cofactor.

It carries out the reaction dUMP + (6R)-5,10-methylene-5,6,7,8-tetrahydrofolate + NADPH + H(+) = dTMP + (6S)-5,6,7,8-tetrahydrofolate + NADP(+). It participates in pyrimidine metabolism; dTTP biosynthesis. Its function is as follows. Catalyzes the reductive methylation of 2'-deoxyuridine-5'-monophosphate (dUMP) to 2'-deoxythymidine-5'-monophosphate (dTMP) while utilizing 5,10-methylenetetrahydrofolate (mTHF) as the methyl donor, and NADPH and FADH(2) as the reductant. This chain is Flavin-dependent thymidylate synthase, found in Mycolicibacterium vanbaalenii (strain DSM 7251 / JCM 13017 / BCRC 16820 / KCTC 9966 / NRRL B-24157 / PYR-1) (Mycobacterium vanbaalenii).